Reading from the N-terminus, the 72-residue chain is Mu-like prophage FluMu protein C (72 aa).

The segment at residues 35–55 (NVPDLIKKYRLSESTIYAILR) is a DNA-binding region (H-T-H motif).

This sequence belongs to the c/mor transcriptional regulatory family.

In terms of biological role, required for transcription of the phage late genes. This Haemophilus influenzae (strain ATCC 51907 / DSM 11121 / KW20 / Rd) protein is Mu-like prophage FluMu protein C.